The sequence spans 433 residues: Actin-related protein 4 (433 aa).

A disordered region spans residues 289 to 317 (GSDEEMNEEPSKPIEQTENNEVSQQDSSV). Residues 302-317 (IEQTENNEVSQQDSSV) are compositionally biased toward polar residues.

Belongs to the actin family. ARP4 subfamily. Component of the NuA4 histone acetyltransferase complex, of the INO80 chromatin remodeling complex, and of the SWR1 chromatin remodeling complex.

Its subcellular location is the nucleus. Chromatin interaction component of the NuA4 histone acetyltransferase complex which is involved in transcriptional activation of selected genes principally by acetylation of nucleosomal histone H4 and H2A. The NuA4 complex is also involved in DNA repair. Is required for NuA4 complex integrity. Component of the SWR1 complex which mediates the ATP-dependent exchange of histone H2A for the H2A variant HZT1 leading to transcriptional regulation of selected genes by chromatin remodeling. Component of the INO80 complex which remodels chromatin by shifting nucleosomes and is involved in DNA repair. This Schizosaccharomyces pombe (strain 972 / ATCC 24843) (Fission yeast) protein is Actin-related protein 4 (alp5).